A 216-amino-acid polypeptide reads, in one-letter code: MAEQLTLDSIEPEPEKQSAKIEKRSIKERRQQVLTVLTHLLHSEKGMERMTTARLAKEVGVSEAALYRYFPSKTKMFEALIENIESSLFSRISYSIKMETNTLNRVHDILQMIFDFARKNPGLTRVLTGHALMFEEAKLQARVALFFDRLELQFVNILQMRKLREGKTFPIDERTIATYLVTFCEGQFMRLVRTNFRHMPNQGFEQQWRFIEPLFE.

The disordered stretch occupies residues Met1 to Lys23. Over residues Glu13–Lys23 the composition is skewed to basic and acidic residues. Residues Glu28–Leu88 enclose the HTH tetR-type domain. The segment at residues Thr51–Phe70 is a DNA-binding region (H-T-H motif).

This sequence belongs to the nucleoid occlusion factor SlmA family. In terms of assembly, homodimer. Interacts with FtsZ.

It localises to the cytoplasm. The protein localises to the nucleoid. Required for nucleoid occlusion (NO) phenomenon, which prevents Z-ring formation and cell division over the nucleoid. Acts as a DNA-associated cell division inhibitor that binds simultaneously chromosomal DNA and FtsZ, and disrupts the assembly of FtsZ polymers. SlmA-DNA-binding sequences (SBS) are dispersed on non-Ter regions of the chromosome, preventing FtsZ polymerization at these regions. In Mannheimia succiniciproducens (strain KCTC 0769BP / MBEL55E), this protein is Nucleoid occlusion factor SlmA.